A 434-amino-acid polypeptide reads, in one-letter code: MGHFMSIRVLTGITTSGTPHLGNYVGAIRPAIRAAGAPGTESFYFLADLHSLIKVQDPERTQRSTLEIAATWLACGLDPEKVWLYRQSDVPEITELMWLLTCVAGKGILNRAHAYKAVVDKNRSEGGDDDAGITAGLFMYPVLMAADILLFNAHQVPVGRDQIQHIEMARDFAQRFNHIYGGEYFVLPEAAIDEQVATLPGLDGRKMSKSYGNTMPLFCTREELKKYVFSIVTDSRAPGEPKEAVGSAVFQLYQAFAGVEECSMFAQALAEGLGWGEAKVRLFERIDAEVAPLRERYEDFMRRPADIEAMLCDSAGRLRERDAIPLLARLREAVGLRSLSLCMASAVPVPQEKVALPVLKQYREQDGRFYFKLIDGQGAVLVQSRGFASPRDAGQWIALFKQAVSAEALVSPMLEPVADPVVVLAALRRLREAG.

Residues 14-16 and 22-23 each bind ATP; these read TTS and GN. Residues 15–23 carry the 'HIGH' region motif; sequence TSGTPHLGN. Position 147 (aspartate 147) interacts with L-tryptophan. Residues 159–161, leucine 199, and 206–210 each bind ATP; these read GRD and KMSKS. The 'KMSKS' region motif lies at 206–210; it reads KMSKS.

Belongs to the class-I aminoacyl-tRNA synthetase family. As to quaternary structure, homodimer.

It localises to the cytoplasm. The catalysed reaction is tRNA(Trp) + L-tryptophan + ATP = L-tryptophyl-tRNA(Trp) + AMP + diphosphate + H(+). Its function is as follows. Catalyzes the attachment of tryptophan to tRNA(Trp). The sequence is that of Tryptophan--tRNA ligase from Xylella fastidiosa (strain 9a5c).